We begin with the raw amino-acid sequence, 322 residues long: Replication factor C small subunit (322 aa).

Position 45 to 52 (45 to 52) interacts with ATP; it reads GPPGVGKT.

The protein belongs to the activator 1 small subunits family. RfcS subfamily. In terms of assembly, heteromultimer composed of small subunits (RfcS) and large subunits (RfcL).

Its function is as follows. Part of the RFC clamp loader complex which loads the PCNA sliding clamp onto DNA. This is Replication factor C small subunit from Methanocella arvoryzae (strain DSM 22066 / NBRC 105507 / MRE50).